Here is a 736-residue protein sequence, read N- to C-terminus: Oligopeptide transporter 6 (736 aa).

Helical transmembrane passes span 43-63 (MWVL…FFWY), 66-86 (MPLS…GHLM), 116-136 (VLIT…HILS), 148-168 (FLPA…WAGL), 210-230 (FFLI…YLFT), 258-278 (LGIG…GSPL), 288-308 (VAIG…WLNI), 357-377 (FFAV…VHVL), 412-432 (VPLW…MFIS), 443-463 (WWGV…IGVI), 489-511 (PVAN…TFIS), 527-547 (FMAQ…TAWW), 602-622 (WFFL…KMFP), 645-665 (ATAV…HFIF), and 678-698 (VLSG…FLAL).

The protein belongs to the oligopeptide OPT transporter (TC 2.A.67.1) family. As to expression, expressed in flowers and roots, and at a low level in leaves and stems. Detected in the cambial zone of the vascular bundles and in the region of lateral root initiation. Low expression in the vascular network of the petals and high in the stamen filaments and the gynoecium.

It is found in the membrane. Functionally, involved in the translocation of tetra- and pentapeptides across the cellular membrane in an energy-dependent manner. Also involved in transport of glutathione derivatives and metal complexes, and may be involved in stress resistance. This is Oligopeptide transporter 6 (OPT6) from Arabidopsis thaliana (Mouse-ear cress).